The sequence spans 151 residues: UPF0208 membrane protein CKO_00500 (151 aa).

2 helical membrane-spanning segments follow: residues 46-65 and 69-91; these read YAIR…QIAL and LGPA…WWLG.

The protein belongs to the UPF0208 family.

It localises to the cell inner membrane. This is UPF0208 membrane protein CKO_00500 from Citrobacter koseri (strain ATCC BAA-895 / CDC 4225-83 / SGSC4696).